Consider the following 777-residue polypeptide: Rho-GTPase-activating protein 8 (777 aa).

The F-BAR domain occupies 3-420 (SSFSNGFWSK…YQEIIQPESD (418 aa)). A coiled-coil region spans residues 117 to 172 (QKLQTSQQVLTNQIKSYEKKYYTLKKTKSAYYNKCRNLEDYEEESKESNETTSEAI). Positions 213 to 296 (VLQEIPLQDY…WKDKAFQFAG (84 aa)) constitute a DEP domain. Residues 454–650 (VDVEFLSHRD…DLLTYGPSIF (197 aa)) form the Rho-GAP domain. Residues 667 to 709 (LYQSSATPRSTDVSPTRPDSISSVRSHTAVESPRSSFEELQPS) are disordered. Polar residues predominate over residues 668–692 (YQSSATPRSTDVSPTRPDSISSVRS). A phosphoserine mark is found at Ser-676 and Ser-680. Residue Thr-682 is modified to Phosphothreonine. Residue Ser-686 is modified to Phosphoserine. Thr-694 is subject to Phosphothreonine. Ser-698 bears the Phosphoserine mark.

In terms of assembly, interacts with pak1/shk1. Post-translationally, phosphorylated by pak1/shk1.

The protein resides in the cytoplasm. Acts in signal transduction. Negatively regulates the pak1/shk1 control pathway. This Schizosaccharomyces pombe (strain 972 / ATCC 24843) (Fission yeast) protein is Rho-GTPase-activating protein 8 (rga8).